A 169-amino-acid chain; its full sequence is MSGTHKKLGARHKARKRAVDFLFEAEARDLDPVDLATERAELSGKDDSVAPVAPYTVTVVTGVAENLDRLDEVISSHLQDWTLERLPAVDRAILRIAVWELFHATDVPPVVAVDEAVELAKQLSTDESPGFVNGILGQVVLVAPQVRSAAAATSRRAETADGESNDARS.

It belongs to the NusB family.

In terms of biological role, involved in transcription antitermination. Required for transcription of ribosomal RNA (rRNA) genes. Binds specifically to the boxA antiterminator sequence of the ribosomal RNA (rrn) operons. In Rhodococcus opacus (strain B4), this protein is Transcription antitermination protein NusB.